The primary structure comprises 1315 residues: Claspin (1315 aa).

Disordered stretches follow at residues E22–L276 and P345–T474. S26, S42, S46, S53, S65, and S67 each carry phosphoserine. Positions S65 to D74 are enriched in acidic residues. A compositionally biased stretch (polar residues) spans N91–S101. Positions D108 to P118 are enriched in acidic residues. Residues S109, S112, and S119 each carry the phosphoserine modification. The span at S119–A128 shows a compositional bias: polar residues. Basic and acidic residues-rich tracts occupy residues L153 to I178 and T186 to L197. The stretch at E159–R187 forms a coiled coil. Positions E205–L228 are enriched in acidic residues. S220 carries the phosphoserine modification. Over residues V235–K245 the composition is skewed to basic residues. A Phosphoserine modification is found at S255. Composition is skewed to basic and acidic residues over residues A391–P415 and E455–P470. Residue S522 is modified to Phosphoserine. Residues E599 to L626 are a coiled coil. The disordered stretch occupies residues A625–L691. Residues E632–T657 show a composition bias toward acidic residues. A compositionally biased stretch (basic and acidic residues) spans K669–T679. 5 positions are modified to phosphoserine: S698, S701, S709, S722, and S740. The disordered stretch occupies residues M713–H750. Low complexity predominate over residues S741–H750. Phosphoserine occurs at positions 785, 787, 810, 816, and 823. Position 868 is an N6-acetyllysine (K868). 2 CKB motif repeats span residues E887–F896 and E917–F926. T893 carries the post-translational modification Phosphothreonine; by CHEK1. Disordered regions lie at residues G924–E1002 and E1032–E1052. Phosphoserine is present on S932. The stretch at E954–F963 is one CKB motif 3 repeat. The interval D966 to E1063 is acidic patch. Composition is skewed to acidic residues over residues R967 to G977, S990 to E1002, and G1043 to E1052. 3 positions are modified to phosphoserine: S990, S996, and S998. Residues E1001–E1036 adopt a coiled-coil conformation. A phosphoserine mark is found at S1133 and S1265. The interval L1264–S1315 is disordered.

Belongs to the claspin family. As to quaternary structure, interacts (phosphorylation-dependent) with CHEK1; regulates CLSPN function in checkpoint for DNA damage and replication. Interacts with ATR and RAD9A and these interactions are slightly reduced during checkpoint activation. Interacts with BRCA1 and this interaction increases during checkpoint activation. Interacts with TIMELESS; the interaction is required for leading-strand replication. Associates with the MCM2-7 complex and other replisome factors. Interacts (via the acidic patch) with CDC7; the interaction is required for phosphorylation of MCM proteins and CLASPIN by CDC7. Interacts with PCNA. Interacts with FZR1. In terms of processing, phosphorylated. Undergoes ATR-dependent phosphorylation by CHEK1 during activation of DNA replication or damage checkpoints. Phosphorylation by CSNK1G1/CK1 promotes CHEK1 binding. Phosphorylated by CDC7 during DNA replication, phosphorylation inhibits interaction between the acidic patch and N-terminal segments leading to increased binding to DNA and PCNA. Post-translationally, ubiquitinated by the anaphase promoting complex/cyclosome (APC/C) during G1 phase, leading to its degradation by the proteasome. Ubiquitination is mediated via its interaction with FZR1/CDH1. Following DNA damage, it is deubiquitinated by USP28 in G2 phase, preventing its degradation. Proteolytically cleaved by caspase-7 (CASP7) in response to apoptosis, leading to its inactivation.

It localises to the nucleus. In terms of biological role, required for checkpoint mediated cell cycle arrest in response to inhibition of DNA replication or to DNA damage induced by both ionizing and UV irradiation. Adapter protein which binds to BRCA1 and the checkpoint kinase CHEK1 and facilitates the ATR-dependent phosphorylation of both proteins. Also required to maintain normal rates of replication fork progression during unperturbed DNA replication. Binds directly to DNA, with particular affinity for branched or forked molecules and interacts with multiple protein components of the replisome such as the MCM2-7 complex and TIMELESS. Important for initiation of DNA replication, recruits kinase CDC7 to phosphorylate MCM2-7 components. The sequence is that of Claspin (Clspn) from Mus musculus (Mouse).